We begin with the raw amino-acid sequence, 319 residues long: Zinc finger protein-like 1 homolog (319 aa).

A B box-type; degenerate zinc finger spans residues 1–43 (MGLCKCPKRKVTNLFCYEHRVNVCEFCLVDNHPNCVVQSYLNW). Residues 53 to 101 (CSLCHTTLTQGETIRLNCLHLLHWRCFDDWAASFPPTTAPAGYRCPCCS) form an RING-type; atypical zinc finger. Residues 212–232 (ESSSDTRPLLRQDRDADNEEN) are disordered. A compositionally biased stretch (basic and acidic residues) spans 219–232 (PLLRQDRDADNEEN). A helical transmembrane segment spans residues 264 to 284 (KMAIFVMFLALLALITIITVL).

It belongs to the ZFPL1 family.

The protein resides in the membrane. This chain is Zinc finger protein-like 1 homolog, found in Caenorhabditis briggsae.